The following is a 142-amino-acid chain: Protein Turandot X (142 aa).

The N-terminal stretch at 1 to 22 (MGLSIGSLLICVFLGIVPFATA) is a signal peptide.

The protein belongs to the Turandot family.

It is found in the secreted. Its function is as follows. A humoral factor that may play a role in stress tolerance. This chain is Protein Turandot X, found in Drosophila melanogaster (Fruit fly).